The sequence spans 344 residues: Methionine import ATP-binding protein MetN (344 aa).

Residues 2–241 form the ABC transporter domain; sequence IEIKSVNKVF…PKTELAHQFI (240 aa). 38-45 serves as a coordination point for ATP; the sequence is GSSGAGKS.

The protein belongs to the ABC transporter superfamily. Methionine importer (TC 3.A.1.24) family. As to quaternary structure, the complex is composed of two ATP-binding proteins (MetN), two transmembrane proteins (MetI) and a solute-binding protein (MetQ).

The protein resides in the cell inner membrane. The catalysed reaction is L-methionine(out) + ATP + H2O = L-methionine(in) + ADP + phosphate + H(+). The enzyme catalyses D-methionine(out) + ATP + H2O = D-methionine(in) + ADP + phosphate + H(+). In terms of biological role, part of the ABC transporter complex MetNIQ involved in methionine import. Responsible for energy coupling to the transport system. This Vibrio cholerae serotype O1 (strain ATCC 39315 / El Tor Inaba N16961) protein is Methionine import ATP-binding protein MetN.